The following is a 581-amino-acid chain: Peptidyl-prolyl cis-trans isomerase FKBP10 (581 aa).

An N-terminal signal peptide occupies residues 1-33; it reads MFLVGSSSHTLHRLRILPLLLLLQTLERGLGRA. PPIase FKBP-type domains follow at residues 61 to 149, 173 to 261, and 285 to 373; these read GDFV…LDVW, SDFV…LDVH, and GDFM…IDFH. N-linked (GlcNAc...) asparagine glycosylation is found at Asn-69, Asn-181, Asn-293, Asn-309, Asn-351, Asn-392, and Asn-406. The PPIase FKBP-type 4 domain occupies 398-485; it reads GDFIRYHYNC…LFEVELVSRE (88 aa). EF-hand domains lie at 496–531 and 541–576; these read WYQD…QVNE and DPDK…DQER. The Ca(2+) site is built by Asp-509, Asn-511, Asp-513, Glu-515, Glu-520, Asp-554, Asn-556, Asp-558, Lys-560, and Glu-565. The tract at residues 533 to 581 is disordered; sequence KGRLMPGQDPDKTISDMFQNQDRNQDGKITAEELKLKSDEDQERVHEEL. The span at 555–581 shows a compositional bias: basic and acidic residues; that stretch reads RNQDGKITAEELKLKSDEDQERVHEEL. The Prevents secretion from ER motif lies at 578 to 581; the sequence is HEEL.

In terms of processing, N-glycosylated. Post-translationally, phosphorylated. In terms of tissue distribution, expressed in aorta, brain, heart, kidney, lung, spleen and testis. Not detected in liver.

The protein resides in the endoplasmic reticulum lumen. The catalysed reaction is [protein]-peptidylproline (omega=180) = [protein]-peptidylproline (omega=0). Its activity is regulated as follows. Inhibited by both FK506 and rapamycin, but not by cyclosporin A. In terms of biological role, PPIases accelerate the folding of proteins during protein synthesis. This is Peptidyl-prolyl cis-trans isomerase FKBP10 (Fkbp10) from Mus musculus (Mouse).